The chain runs to 241 residues: Class B acid phosphatase (241 aa).

The signal sequence occupies residues Met-1–Ala-27. Asp-72 serves as the catalytic Nucleophile. Asp-72 and Asp-74 together coordinate Mg(2+). Residue Asp-74 is the Proton donor of the active site. Substrate contacts are provided by residues Thr-141–Gly-142 and Lys-181. Residue Asp-196 coordinates Mg(2+).

This sequence belongs to the class B bacterial acid phosphatase family. As to quaternary structure, homotetramer. Requires Mg(2+) as cofactor.

It localises to the periplasm. It carries out the reaction a phosphate monoester + H2O = an alcohol + phosphate. Dephosphorylates several organic phosphate monoesters. Also has a phosphotransferase activity catalyzing the transfer of low-energy phosphate groups from organic phosphate monoesters to free hydroxyl groups of various organic compounds. The sequence is that of Class B acid phosphatase from Edwardsiella ictaluri (strain 93-146).